Here is a 247-residue protein sequence, read N- to C-terminus: Cell division protein ZapD (247 aa).

It belongs to the ZapD family. As to quaternary structure, interacts with FtsZ.

The protein localises to the cytoplasm. Functionally, cell division factor that enhances FtsZ-ring assembly. Directly interacts with FtsZ and promotes bundling of FtsZ protofilaments, with a reduction in FtsZ GTPase activity. In Shigella boydii serotype 4 (strain Sb227), this protein is Cell division protein ZapD.